The following is a 207-amino-acid chain: Small ribosomal subunit protein uS4 (207 aa).

Residues 97-165 (SRLDNLVFRM…VKLALESKAV (69 aa)) form the S4 RNA-binding domain.

This sequence belongs to the universal ribosomal protein uS4 family. In terms of assembly, part of the 30S ribosomal subunit. Contacts protein S5. The interaction surface between S4 and S5 is involved in control of translational fidelity.

In terms of biological role, one of the primary rRNA binding proteins, it binds directly to 16S rRNA where it nucleates assembly of the body of the 30S subunit. With S5 and S12 plays an important role in translational accuracy. In Mycoplasmoides gallisepticum (strain R(low / passage 15 / clone 2)) (Mycoplasma gallisepticum), this protein is Small ribosomal subunit protein uS4.